A 657-amino-acid polypeptide reads, in one-letter code: Translation factor GUF1, mitochondrial (657 aa).

A mitochondrion-targeting transit peptide spans M1 to N39. The tr-type G domain maps to E59–V239. Residues T109–S116, L173–E177, and L227–T230 contribute to the GTP site.

It belongs to the TRAFAC class translation factor GTPase superfamily. Classic translation factor GTPase family. LepA subfamily.

The protein localises to the mitochondrion inner membrane. It carries out the reaction GTP + H2O = GDP + phosphate + H(+). Its function is as follows. Promotes mitochondrial protein synthesis. May act as a fidelity factor of the translation reaction, by catalyzing a one-codon backward translocation of tRNAs on improperly translocated ribosomes. Binds to mitochondrial ribosomes in a GTP-dependent manner. This is Translation factor GUF1, mitochondrial from Ajellomyces capsulatus (strain NAm1 / WU24) (Darling's disease fungus).